We begin with the raw amino-acid sequence, 100 residues long: Large ribosomal subunit protein eL21 (100 aa).

It belongs to the eukaryotic ribosomal protein eL21 family.

This Pyrobaculum aerophilum (strain ATCC 51768 / DSM 7523 / JCM 9630 / CIP 104966 / NBRC 100827 / IM2) protein is Large ribosomal subunit protein eL21.